A 166-amino-acid chain; its full sequence is Cytochrome c-550 2 (166 aa).

An N-terminal signal peptide occupies residues 1–32 (MFSRQFGRLATLALALAVAGCAGGEQSTTAEA). 3 residues coordinate heme c: C71, C74, and H75.

This sequence belongs to the cytochrome c family. PsbV subfamily. Heme c serves as cofactor.

It is found in the cell inner membrane. Its function is as follows. Probable low-potential cytochrome c, might function in photosystem II (PSII). This is Cytochrome c-550 2 (psbV2) from Gloeobacter violaceus (strain ATCC 29082 / PCC 7421).